The following is a 589-amino-acid chain: DNA mismatch repair protein MutL (589 aa).

Disordered stretches follow at residues 330–355 and 374–394; these read LQRR…SHRE and RIYE…SEPT. The segment covering 331-341 has biased composition (basic and acidic residues); the sequence is QRREAPQRPEP. Residues 381–390 show a composition bias toward pro residues; it reads PYRPPEPPAA.

This sequence belongs to the DNA mismatch repair MutL/HexB family.

This protein is involved in the repair of mismatches in DNA. It is required for dam-dependent methyl-directed DNA mismatch repair. May act as a 'molecular matchmaker', a protein that promotes the formation of a stable complex between two or more DNA-binding proteins in an ATP-dependent manner without itself being part of a final effector complex. The chain is DNA mismatch repair protein MutL from Trichlorobacter lovleyi (strain ATCC BAA-1151 / DSM 17278 / SZ) (Geobacter lovleyi).